A 256-amino-acid polypeptide reads, in one-letter code: tRNA pseudouridine synthase A (256 aa).

Catalysis depends on Asp52, which acts as the Nucleophile. Residue Tyr111 coordinates substrate.

The protein belongs to the tRNA pseudouridine synthase TruA family. Homodimer.

It carries out the reaction uridine(38/39/40) in tRNA = pseudouridine(38/39/40) in tRNA. In terms of biological role, formation of pseudouridine at positions 38, 39 and 40 in the anticodon stem and loop of transfer RNAs. This chain is tRNA pseudouridine synthase A, found in Paramagnetospirillum magneticum (strain ATCC 700264 / AMB-1) (Magnetospirillum magneticum).